Reading from the N-terminus, the 157-residue chain is Crossover junction endodeoxyribonuclease RuvC (157 aa).

Catalysis depends on residues D7, E67, and D140. Mg(2+) contacts are provided by D7, E67, and D140.

The protein belongs to the RuvC family. As to quaternary structure, homodimer which binds Holliday junction (HJ) DNA. The HJ becomes 2-fold symmetrical on binding to RuvC with unstacked arms; it has a different conformation from HJ DNA in complex with RuvA. In the full resolvosome a probable DNA-RuvA(4)-RuvB(12)-RuvC(2) complex forms which resolves the HJ. Mg(2+) serves as cofactor.

The protein resides in the cytoplasm. The catalysed reaction is Endonucleolytic cleavage at a junction such as a reciprocal single-stranded crossover between two homologous DNA duplexes (Holliday junction).. The RuvA-RuvB-RuvC complex processes Holliday junction (HJ) DNA during genetic recombination and DNA repair. Endonuclease that resolves HJ intermediates. Cleaves cruciform DNA by making single-stranded nicks across the HJ at symmetrical positions within the homologous arms, yielding a 5'-phosphate and a 3'-hydroxyl group; requires a central core of homology in the junction. The consensus cleavage sequence is 5'-(A/T)TT(C/G)-3'. Cleavage occurs on the 3'-side of the TT dinucleotide at the point of strand exchange. HJ branch migration catalyzed by RuvA-RuvB allows RuvC to scan DNA until it finds its consensus sequence, where it cleaves and resolves the cruciform DNA. The chain is Crossover junction endodeoxyribonuclease RuvC from Rickettsia typhi (strain ATCC VR-144 / Wilmington).